We begin with the raw amino-acid sequence, 938 residues long: Isoleucine--tRNA ligase (938 aa).

A 'HIGH' region motif is present at residues 58–68; it reads PYANGNIHMGH. Glu566 contributes to the L-isoleucyl-5'-AMP binding site. Positions 607–611 match the 'KMSKS' region motif; the sequence is KMSKS. Position 610 (Lys610) interacts with ATP. 4 residues coordinate Zn(2+): Cys906, Cys909, Cys926, and Cys929.

It belongs to the class-I aminoacyl-tRNA synthetase family. IleS type 1 subfamily. Monomer. Zn(2+) serves as cofactor.

It localises to the cytoplasm. The catalysed reaction is tRNA(Ile) + L-isoleucine + ATP = L-isoleucyl-tRNA(Ile) + AMP + diphosphate. Functionally, catalyzes the attachment of isoleucine to tRNA(Ile). As IleRS can inadvertently accommodate and process structurally similar amino acids such as valine, to avoid such errors it has two additional distinct tRNA(Ile)-dependent editing activities. One activity is designated as 'pretransfer' editing and involves the hydrolysis of activated Val-AMP. The other activity is designated 'posttransfer' editing and involves deacylation of mischarged Val-tRNA(Ile). This chain is Isoleucine--tRNA ligase, found in Nitratidesulfovibrio vulgaris (strain ATCC 29579 / DSM 644 / CCUG 34227 / NCIMB 8303 / VKM B-1760 / Hildenborough) (Desulfovibrio vulgaris).